Reading from the N-terminus, the 1088-residue chain is Myocardin-related transcription factor B (1088 aa).

E22 is modified (phosphoserine). The stretch at 40–65 is one RPEL 1 repeat; that stretch reads EVLQLRLQQRRTREQLVDQGIMPPLK. S66 is subject to Phosphoserine. RPEL repeat units lie at residues 84-109 and 128-153; these read NFLK…EETF and DDLN…PVDS. Disordered stretches follow at residues 165–310, 349–389, 472–508, and 528–553; these read EDYP…NEPQ, KPLN…PSSL, AELP…STDD, and LSSS…SNLE. Residues 197–213 show a composition bias toward low complexity; the sequence is SAASPSEPKVSESPSPV. Polar residues predominate over residues 214 to 226; the sequence is TTNTPAQFASVSP. Pro residues predominate over residues 238-248; it reads ADQPPPRPAAP. Residues 272-287 show a composition bias toward basic and acidic residues; sequence NPNDKHRSKKCKDPKP. Residues 355–366 are compositionally biased toward low complexity; it reads NSNSGNSALNNA. Phosphothreonine occurs at positions 367 and 370. Polar residues predominate over residues 367-378; sequence TPNTPRQNTSTP. The 35-residue stretch at 389 to 423 folds into the SAP domain; sequence LDDLKVSELKTELKLRGLPVSGTKPDLIERLKPYQ. Polar residues predominate over residues 528 to 540; it reads LSSSPLRMTNNED. Phosphoserine is present on residues S541 and S543. The span at 541–550 shows a compositional bias: low complexity; the sequence is SLSPTSSTLS. Residues 545-601 are a coiled coil; it reads TSSTLSNLELDAAEKDRKLQEKEKQIEELKRKLEQEQKLVEVLKMQLEVEKRGQQQR. The required for interaction with itself and with MRTFA stretch occupies residues 563 to 591; sequence LQEKEKQIEELKRKLEQEQKLVEVLKMQL. Disordered stretches follow at residues 595–655 and 829–886; these read KRGQ…QPVS and NAPL…STQA. A Glycyl lysine isopeptide (Lys-Gly) (interchain with G-Cter in SUMO1) cross-link involves residue K628. Positions 829-838 are enriched in polar residues; the sequence is NAPLPSLQNG. A compositionally biased stretch (basic and acidic residues) spans 867–879; the sequence is KTKDPPRYEEAIK. The residue at position 921 (S921) is a Phosphoserine.

In terms of assembly, interacts with MRTFA and SRF. In terms of processing, O-glycosylated.

Its subcellular location is the nucleus. In terms of biological role, acts as a transcriptional coactivator of serum response factor (SRF). Required for skeletal myogenic differentiation. The protein is Myocardin-related transcription factor B of Homo sapiens (Human).